A 505-amino-acid chain; its full sequence is Putative pentatricopeptide repeat-containing protein At1g26500 (505 aa).

7 PPR repeats span residues 145–179, 180–210, 214–248, 249–279, 285–319, 320–350, and 351–385; these read NDKT…GYLY, NVET…LKEF, DEIT…GFDV, DIEA…MVSK, DGGF…GVYV, DNLT…VENP, and DISI…GCEP.

Belongs to the PPR family. P subfamily.

This Arabidopsis thaliana (Mouse-ear cress) protein is Putative pentatricopeptide repeat-containing protein At1g26500.